We begin with the raw amino-acid sequence, 1766 residues long: Putative ATP-dependent RNA helicase R366 (1766 aa).

A disordered region spans residues K209–Q239. Residues S210–Q239 are compositionally biased toward low complexity. The Helicase ATP-binding domain occupies Y656–R865. An ATP-binding site is contributed by G669 to S676. Residues D812–H815 carry the DEAH box motif. Residues D947–P1116 form the Helicase C-terminal domain.

Belongs to the DEAD box helicase family. DEAH subfamily.

The enzyme catalyses ATP + H2O = ADP + phosphate + H(+). This chain is Putative ATP-dependent RNA helicase R366, found in Acanthamoeba polyphaga mimivirus (APMV).